We begin with the raw amino-acid sequence, 224 residues long: Mannose-specific lectin 3 (224 aa).

2 Bulb-type lectin domains span residues 2–111 (NNVL…PAAA) and 117–222 (RNVL…VWST). 2 disulfide bridges follow: Cys-30–Cys-52 and Cys-145–Cys-170.

Heterotetramer of 2 domain 1 and 2 domain 2 chains arranged as a dimer of domain 1/domain 2 heterodimers.

Mannose-specific lectin. Has weak agglutinating activity towards trypsin-treated erythrocytes from rabbit but not from human. The protein is Mannose-specific lectin 3 of Crocus vernus (Dutch crocus).